The sequence spans 1167 residues: Pesticidal crystal protein Cry21Aa (1167 aa).

The protein belongs to the delta endotoxin family.

Functionally, endotoxin with nematicidal activity. This is Pesticidal crystal protein Cry21Aa (cry21Aa) from Bacillus thuringiensis.